The chain runs to 467 residues: Pachytene checkpoint protein 2 homolog (467 aa).

Gly209–Thr216 is a binding site for ATP.

This sequence belongs to the AAA ATPase family. PCH2 subfamily.

The protein resides in the chromosome. Its function is as follows. Plays a key role in chromosome recombination during meiosis. Mediates meiotic chromosome remodeling and crossover maturation. The polypeptide is Pachytene checkpoint protein 2 homolog (Arabidopsis thaliana (Mouse-ear cress)).